A 213-amino-acid polypeptide reads, in one-letter code: MRTIDKRIAPNVRLAATLVARAPALTLAYDARCKSRLAATLDTGEDVALVLPRGTVLRDGDVLVADDGALVRVAAAHEAVLLVRAPDALTLTRAAYHLGNRHTPVEVGAGCLKLEYDPALADMLTRLGATVERASAPFQPEAGAYGGGHRHGHDATFAEDYALAQQVFDEHHGHSHSHSHSHSHDHDHDHDHDHDHDHQHGPSCSHGHHHGHR.

A disordered region spans residues 170-213 (EHHGHSHSHSHSHSHDHDHDHDHDHDHDHQHGPSCSHGHHHGHR). Over residues 182–200 (HSHDHDHDHDHDHDHDHQH) the composition is skewed to basic and acidic residues.

This sequence belongs to the UreE family.

Its subcellular location is the cytoplasm. Involved in urease metallocenter assembly. Binds nickel. Probably functions as a nickel donor during metallocenter assembly. The chain is Urease accessory protein UreE from Burkholderia mallei (strain NCTC 10229).